The chain runs to 679 residues: Methionine--tRNA ligase (679 aa).

The short motif at 14 to 24 is the 'HIGH' region element; it reads PYANGSIHLGH. Zn(2+) is bound by residues Cys145, Cys148, Cys158, and Cys161. The 'KMSKS' region motif lies at 331–335; sequence KMSKS. An ATP-binding site is contributed by Lys334. The region spanning 577 to 679 is the tRNA-binding domain; that stretch reads TFAAVDLRVA…SGAKPGQRIK (103 aa).

It belongs to the class-I aminoacyl-tRNA synthetase family. MetG type 1 subfamily. In terms of assembly, homodimer. Zn(2+) is required as a cofactor.

It is found in the cytoplasm. It catalyses the reaction tRNA(Met) + L-methionine + ATP = L-methionyl-tRNA(Met) + AMP + diphosphate. Functionally, is required not only for elongation of protein synthesis but also for the initiation of all mRNA translation through initiator tRNA(fMet) aminoacylation. The protein is Methionine--tRNA ligase of Pseudomonas entomophila (strain L48).